The sequence spans 608 residues: RAS guanyl-releasing protein 2 (608 aa).

The N-terminal Ras-GEF domain maps to Thr4–Thr126. Residues Ser116, Ser117, and Ser147 each carry the phosphoserine modification. The region spanning Glu154–Arg387 is the Ras-GEF domain. The tract at residues Leu382–Pro405 is disordered. EF-hand domains are found at residues His426–Leu461 and Ala463–Val490. The Ca(2+) site is built by Asp439, Asp441, Asp443, His445, Glu450, Asp468, Asn470, Asp472, Cys474, and Glu479. A Phorbol-ester/DAG-type zinc finger spans residues Val498 to Cys548. A phosphoserine mark is found at Ser554 and Ser575. A disordered region spans residues Val555–Val596.

Belongs to the RASGRP family. In terms of assembly, forms a signaling complex with RAP1 and BRAF. Interacts with F-actin. Interacts with RAP1. In terms of tissue distribution, expressed in striatal neurons (at protein level). Expressed in the hematopoietic system. Detected in olfactory structures and deep cortical layers of brain.

It is found in the cytoplasm. The protein localises to the cytosol. Its subcellular location is the cell membrane. It localises to the synapse. The protein resides in the synaptosome. It is found in the cell projection. The protein localises to the ruffle membrane. Its function is as follows. Functions as a calcium- and DAG-regulated nucleotide exchange factor specifically activating Rap through the exchange of bound GDP for GTP. May also activate other GTPases such as RRAS, RRAS2, NRAS, KRAS but not HRAS. Functions in aggregation of platelets and adhesion of T-lymphocytes and neutrophils probably through inside-out integrin activation. May function in the muscarinic acetylcholine receptor M1/CHRM1 signaling pathway. This Rattus norvegicus (Rat) protein is RAS guanyl-releasing protein 2 (Rasgrp2).